Here is a 482-residue protein sequence, read N- to C-terminus: MKQSILFERVSARLKAQVGPDVYASWFARLKLHSVSKSVVRLSVPTTFLKSWINNRYLDLITGLFQAEDPEILKIEVLVRTATRHGTKALDEVVAPEPAAPTQMRRPTSAQPAGQAVQQAVSAVAAARPASFGSPLFGSPLDSRFTFDTFVEGSSNRVALAAAKTIAEAGQGAVRFNPLFIHSTVGLGKTHLLQAVANAAVQNPRSLRVVYLTAEYFMWRFATAIRDNDALTLKDSLRNIDLLIIDDMQFLQGKMIQHEFCHLLNMLLDSAKQVVVAADRAPWELESLDPRVRSRLQGGVAIEFDAPDYEMRLEILKRRLAVARLEDPSLEIPAELLQHVARNVTASGRELEGAFNQLVFRRSFEPNLSIERVDELLAHLVGSGEPRRVRIEDIQRIVARHYNVSRQELVSNRRTRVIVKPRQIAMYLSKTLTPRSFPEIGRRFGGRDHTTVLHAVRKIEELISGDTKLSHEVELLKRLINE.

The domain I, interacts with DnaA modulators stretch occupies residues 1–71; it reads MKQSILFERV…TGLFQAEDPE (71 aa). A domain II region spans residues 71–139; the sequence is EILKIEVLVR…ASFGSPLFGS (69 aa). The tract at residues 140 to 362 is domain III, AAA+ region; the sequence is PLDSRFTFDT…GAFNQLVFRR (223 aa). The ATP site is built by glycine 186, glycine 188, lysine 189, and threonine 190. The tract at residues 363–482 is domain IV, binds dsDNA; that stretch reads SFEPNLSIER…VELLKRLINE (120 aa).

Belongs to the DnaA family. As to quaternary structure, oligomerizes as a right-handed, spiral filament on DNA at oriC.

The protein localises to the cytoplasm. Its function is as follows. Plays an essential role in the initiation and regulation of chromosomal replication. ATP-DnaA binds to the origin of replication (oriC) to initiate formation of the DNA replication initiation complex once per cell cycle. Binds the DnaA box (a 9 base pair repeat at the origin) and separates the double-stranded (ds)DNA. Forms a right-handed helical filament on oriC DNA; dsDNA binds to the exterior of the filament while single-stranded (ss)DNA is stabiized in the filament's interior. The ATP-DnaA-oriC complex binds and stabilizes one strand of the AT-rich DNA unwinding element (DUE), permitting loading of DNA polymerase. After initiation quickly degrades to an ADP-DnaA complex that is not apt for DNA replication. Binds acidic phospholipids. In Rhizobium johnstonii (strain DSM 114642 / LMG 32736 / 3841) (Rhizobium leguminosarum bv. viciae), this protein is Chromosomal replication initiator protein DnaA.